The chain runs to 55 residues: Large ribosomal subunit protein bL33 (55 aa).

This sequence belongs to the bacterial ribosomal protein bL33 family.

The protein is Large ribosomal subunit protein bL33 of Paenarthrobacter aurescens (strain TC1).